Here is a 406-residue protein sequence, read N- to C-terminus: MKKVHERFLEYVKVDTKSDETTRVTPSTKGQLELGKILAEELKKIGVDEVRISDKGYVYACLKSNCDKDIPKIGFISHMDTAPDMSGKNVNPKIVENYDGKDIELGNGYTLSPSFSPELPMYKGQTLITTDGTTLLGADDKAGVAEIITAIEYLINHPEIKHGDIKIGFTPDEEIGEGADHFDVEGFGADFAYTLDGGRIGELEYENFNAASAKVEIIGKNVHPGSAKGKMINSILVAHEFVSMLPLNEVPEKTEGYEGFSFLLDIQGEVEKTSLSFIIRDFDKEGFKNRKERFNEIANELNKKYGEGTVTVTLKDQYMNMKEMIEPRMHIVETAEKAMKQCGIEPIKKPIRGGTDGARLSFMGLPTPNIFTGGENFHGRYEYISVNSMEKAVEVILNIIKIYAEK.

H78 provides a ligand contact to Zn(2+). The active site involves D80. Zn(2+) is bound at residue D139. The active-site Proton acceptor is the E173. Residues E174, D196, and H378 each coordinate Zn(2+).

This sequence belongs to the peptidase M20B family. The cofactor is Zn(2+).

The protein resides in the cytoplasm. It carries out the reaction Release of the N-terminal residue from a tripeptide.. In terms of biological role, cleaves the N-terminal amino acid of tripeptides. The polypeptide is Peptidase T (Clostridium perfringens (strain SM101 / Type A)).